An 801-amino-acid chain; its full sequence is Mitochondrial intermediate peptidase (801 aa).

Residues 1–41 constitute a mitochondrion transit peptide; it reads MKDQLLVPLRRRPWTCQKCLQRLQLPRHQTRRSFETAASPF. His564 is a Zn(2+) binding site. The active site involves Glu565. Zn(2+)-binding residues include His568 and His571.

Belongs to the peptidase M3 family. Zn(2+) serves as cofactor.

It is found in the mitochondrion matrix. It carries out the reaction Release of an N-terminal octapeptide as second stage of processing of some proteins imported into the mitochondrion.. In terms of biological role, cleaves proteins, imported into the mitochondrion, to their mature size. While most mitochondrial precursor proteins are processed to the mature form in one step by mitochondrial processing peptidase (MPP), the sequential cleavage by MIP of an octapeptide after initial processing by MPP is a required step for a subgroup of nuclear-encoded precursor proteins destined for the matrix or the inner membrane. In Aspergillus fumigatus (strain ATCC MYA-4609 / CBS 101355 / FGSC A1100 / Af293) (Neosartorya fumigata), this protein is Mitochondrial intermediate peptidase (oct1).